A 473-amino-acid chain; its full sequence is MSRLVVVSNRIAPPDNKGGAGGLAVGVLGALKAAGGLWFGWSGETGNEDEPLKKVTKGNITWASFNLSEQDYEDYYCQFSNAVLWPAFHYRLDLVQFQRPAWEGYMRVNALLADKLLPLIKENDIIWVHDYHLLPFASELRKRGVNNRIGFFLHIPFPTPEIFNALPPHDELLEQLCDFDLLGFQTENDRLAFLDSLLSQTRVTTRSGKQHIAWGKDFQTEVYPIGIEPDEIALQAAGPLPPKLAQLKAELKNVKNIFSVERLDYSKGLPERFLAYEALLENYPQHRGKIRYTQIAPTSRGEVQAYQDIRHQLETEAGRINGKYGQLGWTPLYYLNQHFDRKLLMKIFRYSDVGLVTPLRDGMNLVAKEFVAAQDPANPGVLVLSQFAGAANELTSALIVNPYDRDDVAAALNRALTMPLAERISRHAEMLDVIVKNDINRWQERFIHDLKEVTPRSPERQQQNNVATFPKLA.

Arg-10 serves as a coordination point for D-glucose 6-phosphate. 21–22 is a UDP-alpha-D-glucose binding site; it reads GG. Positions 76 and 130 each coordinate D-glucose 6-phosphate. UDP-alpha-D-glucose-binding residues include Arg-262 and Lys-267. Arg-300 provides a ligand contact to D-glucose 6-phosphate. UDP-alpha-D-glucose is bound by residues Phe-339 and 365–369; that span reads LVAKE. The disordered stretch occupies residues 454-473; the sequence is TPRSPERQQQNNVATFPKLA.

This sequence belongs to the glycosyltransferase 20 family. Homotetramer.

The enzyme catalyses D-glucose 6-phosphate + UDP-alpha-D-glucose = alpha,alpha-trehalose 6-phosphate + UDP + H(+). Its pathway is glycan biosynthesis; trehalose biosynthesis. In terms of biological role, probably involved in the osmoprotection via the biosynthesis of trehalose. Catalyzes the transfer of glucose from UDP-alpha-D-glucose (UDP-Glc) to D-glucose 6-phosphate (Glc-6-P) to form trehalose-6-phosphate. Acts with retention of the anomeric configuration of the UDP-sugar donor. The protein is Trehalose-6-phosphate synthase of Salmonella choleraesuis (strain SC-B67).